The sequence spans 468 residues: ATP synthase subunit beta (468 aa).

148 to 155 (GGAGVGKT) is a binding site for ATP.

It belongs to the ATPase alpha/beta chains family. In terms of assembly, F-type ATPases have 2 components, CF(1) - the catalytic core - and CF(0) - the membrane proton channel. CF(1) has five subunits: alpha(3), beta(3), gamma(1), delta(1), epsilon(1). CF(0) has three main subunits: a(1), b(2) and c(9-12). The alpha and beta chains form an alternating ring which encloses part of the gamma chain. CF(1) is attached to CF(0) by a central stalk formed by the gamma and epsilon chains, while a peripheral stalk is formed by the delta and b chains.

It localises to the cell inner membrane. The catalysed reaction is ATP + H2O + 4 H(+)(in) = ADP + phosphate + 5 H(+)(out). In terms of biological role, produces ATP from ADP in the presence of a proton gradient across the membrane. The catalytic sites are hosted primarily by the beta subunits. This is ATP synthase subunit beta from Xanthomonas campestris pv. campestris (strain B100).